We begin with the raw amino-acid sequence, 377 residues long: Transcription initiation factor IIA subunit 1 (377 aa).

N-acetylalanine is present on Ala2. 3 stretches are compositionally biased toward low complexity: residues 69-79, 89-105, and 248-280; these read QVQQQHQPQQQ, QAQPQQTVPQQAQTQQV, and QAQIPAAGQQQPQAQPAQQQAPLVLQVDGTGDT. Disordered regions lie at residues 69–107 and 248–330; these read QVQQQHQPQQQQHHHHHHHQQAQPQQTVPQQAQTQQVLI and QAQI…QELF. Phosphoserine; by TAF1 is present on residues Ser281 and Ser282. Residues 281-330 are compositionally biased toward acidic residues; it reads SSEEDEDEEEDYDDDEEEDKEKDGAEDGQVEEEPLNSEDDVSDEEGQELF. Phosphoserine is present on residues Ser317 and Ser322. 2 residues coordinate DNA: His344 and Arg345.

It belongs to the TFIIA subunit 1 family. In terms of assembly, TFIIA is a heterodimer of the large unprocessed subunit 1 and a small subunit gamma. It was originally believed to be a heterotrimer of an alpha (p35), a beta (p19) and a gamma subunit (p12). TFIIA forms a complex with TBP. Part of TBP-based Pol II pre-initiation complex (PIC), in which Pol II core assembles with general transcription factors and other specific initiation factors including GTF2E1, GTF2E2, GTF2F1, GTF2F2, TCEA1, ERCC2, ERCC3, GTF2H2, GTF2H3, GTF2H4, GTF2H5, GTF2A1, GTF2A2, GTF2B and TBP; this large multi-subunit PIC complex mediates DNA unwinding and targets Pol II core to the transcription start site where the first phosphodiester bond forms. The alpha and beta subunits are postranslationally produced from the precursor formby TASP1. The cleavage promotes proteasomal degradation.

Its subcellular location is the nucleus. Its function is as follows. TFIIA is a component of the transcription machinery of RNA polymerase II and plays an important role in transcriptional activation. TFIIA in a complex with TBP mediates transcriptional activity. This chain is Transcription initiation factor IIA subunit 1 (Gtf2a1), found in Rattus norvegicus (Rat).